A 146-amino-acid chain; its full sequence is Arginine vasopressin-induced protein 1 (146 aa).

Disordered stretches follow at residues 1–31 (MGTP…RKQA) and 80–146 (RRKR…QIRH). Positions 80-92 (RRKRPPRQNHCSR) are enriched in basic residues. Over residues 106-123 (QASTTDTASSEQFGNSRR) the composition is skewed to polar residues.

May be involved in MAP kinase activation, epithelial sodium channel (ENaC) down-regulation and cell cycling. This chain is Arginine vasopressin-induced protein 1 (Avpi1), found in Rattus norvegicus (Rat).